The chain runs to 153 residues: Small ribosomal subunit protein eS19 (153 aa).

Disordered stretches follow at residues 77-99 (YGTSKQGTTRYRVRPHQKTKGSG) and 113-139 (GYVETSENDGRRVTGDGRSLLDDTAGD). A compositionally biased stretch (basic and acidic residues) spans 120–133 (NDGRRVTGDGRSLL).

The protein belongs to the eukaryotic ribosomal protein eS19 family. Part of the 30S ribosomal subunit.

Functionally, may be involved in maturation of the 30S ribosomal subunit. The chain is Small ribosomal subunit protein eS19 from Haloarcula marismortui (strain ATCC 43049 / DSM 3752 / JCM 8966 / VKM B-1809) (Halobacterium marismortui).